The following is a 147-amino-acid chain: UPF0306 protein YhbP (147 aa).

The protein belongs to the UPF0306 family.

This is UPF0306 protein YhbP from Shigella sonnei (strain Ss046).